The primary structure comprises 430 residues: Cell division protein FtsZ (430 aa).

Residues 76–80 (GGGCN), 163–165 (GTG), Glu194, Arg198, and Asp242 contribute to the GTP site. Residues 374–418 (KEKPQAKTSSKPVLSGPPAGVETVPSTTTPEDPLGEIPMAPELDI) are disordered.

This sequence belongs to the FtsZ family. In terms of assembly, homodimer. Polymerizes to form a dynamic ring structure in a strictly GTP-dependent manner. Interacts directly with several other division proteins.

It is found in the cytoplasm. Essential cell division protein that forms a contractile ring structure (Z ring) at the future cell division site. The regulation of the ring assembly controls the timing and the location of cell division. One of the functions of the FtsZ ring is to recruit other cell division proteins to the septum to produce a new cell wall between the dividing cells. Binds GTP and shows GTPase activity. This Synechocystis sp. (strain ATCC 27184 / PCC 6803 / Kazusa) protein is Cell division protein FtsZ.